Reading from the N-terminus, the 166-residue chain is Prorelaxin H2 (166 aa).

The first 5 residues, 1 to 5 (SRAVA), serve as a signal peptide directing secretion. Intrachain disulfides connect Cys16–Cys153, Cys28–Cys166, and Cys152–Cys157. Residues 37–138 (SLSQEDAPQT…LKYLGLDTHS (102 aa)) constitute a propeptide, connecting peptide.

It belongs to the insulin family. Heterodimer of a B chain and an A chain linked by two disulfide bonds. In terms of tissue distribution, expressed in the corpus luteum of pregnancy and in the placenta.

It localises to the secreted. Functionally, relaxin is an ovarian hormone that acts with estrogen to produce dilatation of the birth canal in many mammals. May be involved in remodeling of connective tissues during pregnancy, promoting growth of pubic ligaments and ripening of the cervix. This chain is Prorelaxin H2 (RNL2), found in Pan troglodytes (Chimpanzee).